Here is a 743-residue protein sequence, read N- to C-terminus: 1,4-alpha-glucan branching enzyme GlgB (743 aa).

Asp416 functions as the Nucleophile in the catalytic mechanism. Glu469 functions as the Proton donor in the catalytic mechanism.

This sequence belongs to the glycosyl hydrolase 13 family. GlgB subfamily. In terms of assembly, monomer.

It catalyses the reaction Transfers a segment of a (1-&gt;4)-alpha-D-glucan chain to a primary hydroxy group in a similar glucan chain.. The protein operates within glycan biosynthesis; glycogen biosynthesis. In terms of biological role, catalyzes the formation of the alpha-1,6-glucosidic linkages in glycogen by scission of a 1,4-alpha-linked oligosaccharide from growing alpha-1,4-glucan chains and the subsequent attachment of the oligosaccharide to the alpha-1,6 position. This Shewanella baltica (strain OS223) protein is 1,4-alpha-glucan branching enzyme GlgB.